We begin with the raw amino-acid sequence, 829 residues long: Leucine--tRNA ligase (829 aa).

The short motif at 40 to 50 (PYPSGNIHMGH) is the 'HIGH' region element. The 'KMSKS' region signature appears at 581 to 585 (KMSKS). Lysine 584 contributes to the ATP binding site.

This sequence belongs to the class-I aminoacyl-tRNA synthetase family.

The protein localises to the cytoplasm. The catalysed reaction is tRNA(Leu) + L-leucine + ATP = L-leucyl-tRNA(Leu) + AMP + diphosphate. This is Leucine--tRNA ligase from Nitratidesulfovibrio vulgaris (strain DP4) (Desulfovibrio vulgaris).